A 174-amino-acid chain; its full sequence is MQDRRSSYDYEGLLACGRGELFGPGNAQLPLPPMLMFDRITEITEDGGEFGKGLIRAELDVKSDLWFFGCHFKGDPVMPGCLGLDALWQMVGFYLGWTGGEGRGRALGLGDLKFSGQVLPHVRKVVYNVDIKRVMRSKLVLGIADGWLSTDGDIIYRAKDLKVGLFKQDAAPGT.

Residue His-71 is part of the active site.

This sequence belongs to the thioester dehydratase family. FabA subfamily. Homodimer.

Its subcellular location is the cytoplasm. The catalysed reaction is a (3R)-hydroxyacyl-[ACP] = a (2E)-enoyl-[ACP] + H2O. It carries out the reaction (3R)-hydroxydecanoyl-[ACP] = (2E)-decenoyl-[ACP] + H2O. The enzyme catalyses (2E)-decenoyl-[ACP] = (3Z)-decenoyl-[ACP]. It participates in lipid metabolism; fatty acid biosynthesis. Necessary for the introduction of cis unsaturation into fatty acids. Catalyzes the dehydration of (3R)-3-hydroxydecanoyl-ACP to E-(2)-decenoyl-ACP and then its isomerization to Z-(3)-decenoyl-ACP. Can catalyze the dehydratase reaction for beta-hydroxyacyl-ACPs with saturated chain lengths up to 16:0, being most active on intermediate chain length. The polypeptide is 3-hydroxydecanoyl-[acyl-carrier-protein] dehydratase (Nitrobacter hamburgensis (strain DSM 10229 / NCIMB 13809 / X14)).